The primary structure comprises 439 residues: Elongation factor Tu, mitochondrial (439 aa).

One can recognise a tr-type G domain in the interval 51–246; sequence KPHVNIGTIG…AVDSYITLPE (196 aa). A G1 region spans residues 60–67; it reads GHVDHGKT. 60-67 is a binding site for GTP; it reads GHVDHGKT. Residues 101–105 are G2; the sequence is GITIS. The segment at 122–125 is G3; sequence DCPG. GTP is bound by residues 122-126 and 177-180; these read DCPGH and NKVD. The G4 stretch occupies residues 177–180; the sequence is NKVD. The tract at residues 214–216 is G5; that stretch reads SAL.

This sequence belongs to the TRAFAC class translation factor GTPase superfamily. Classic translation factor GTPase family. EF-Tu/EF-1A subfamily.

Its subcellular location is the mitochondrion. Functionally, this protein promotes the GTP-dependent binding of aminoacyl-tRNA to the A-site of ribosomes during protein biosynthesis. This is Elongation factor Tu, mitochondrial (tuf1) from Schizosaccharomyces pombe (strain 972 / ATCC 24843) (Fission yeast).